The sequence spans 572 residues: Arginine--tRNA ligase (572 aa).

Residues 122-132 carry the 'HIGH' region motif; the sequence is PNLAKEMHVGH.

The protein belongs to the class-I aminoacyl-tRNA synthetase family. As to quaternary structure, monomer.

It is found in the cytoplasm. It catalyses the reaction tRNA(Arg) + L-arginine + ATP = L-arginyl-tRNA(Arg) + AMP + diphosphate. The protein is Arginine--tRNA ligase of Neisseria meningitidis serogroup C / serotype 2a (strain ATCC 700532 / DSM 15464 / FAM18).